A 244-amino-acid polypeptide reads, in one-letter code: Meiotic drive suppressor wtf2 (244 aa).

Positions Met1–Ser10 are enriched in polar residues. Residues Met1–Asp68 are disordered. The span at Glu17–Pro30 shows a compositional bias: basic and acidic residues. The next 4 helical transmembrane spans lie at Phe73–Cys93, Trp110–Phe130, Trp149–Pro169, and Leu183–Ala203.

This sequence belongs to the WTF family. Homomer. Interacts with other proteins that exhibit high sequence similarity.

Its subcellular location is the spore membrane. The protein localises to the vacuole membrane. Its function is as follows. Acts as a suppressor component of the dual wtf meiotic drive system, and can suppress but not confer meiotic drive by compatible poisons. Wtf meiotic drive systems promote unequal transmission of alleles from the parental zygote to progeny spores by encoding a poison and an antidote from the same locus; the poison is trans-acting and forms toxic aggregates in all spores within an ascus, wherease the antidote is spore-specific and targets aggregates for degradation by the vacuole. Meiotic drive by wtf systems therefore lead to poisoning of all progeny that do not inherit the dual poison/antidote allele, or express a compatible antidote. The polypeptide is Meiotic drive suppressor wtf2 (Schizosaccharomyces kambucha (Fission yeast)).